A 310-amino-acid chain; its full sequence is Isoflavone reductase homolog P3 (310 aa).

NADP(+) is bound by residues 12-18 (GGTGYIG), R37, and K46. K134 serves as the catalytic Proton acceptor. R138 lines the NADP(+) pocket.

Belongs to the NmrA-type oxidoreductase family. Isoflavone reductase subfamily.

The protein resides in the cytoplasm. This is Isoflavone reductase homolog P3 from Arabidopsis thaliana (Mouse-ear cress).